Reading from the N-terminus, the 274-residue chain is MRKVAIYGKGGIGKSTTTQNTVAGLAEAGKKVMVVGCDPKADSTRLLLGGLQQKTVLDTLREEGEEVELEDIIKEGYKGSRCTESGGPEPGVGCAGRGIITSVNLLEQLGAYDDEWNLDYVFYDVLGDVVCGGFAMPIRDGKAEEIYIVCSGEMMAMYAANNICKGILKYADAGGVRLGGLICNSRKVDNEREMIEELARRIGTQMIHFVPRDNFVQRAEINRKTVIDYDPTHPQADEYRALARKIDENKMFVIPKPLEIDELESLLIEFGIAN.

Position 8 to 15 (8 to 15 (GKGGIGKS)) interacts with ATP. Cysteine 94 contacts [4Fe-4S] cluster. Arginine 97 bears the ADP-ribosylarginine; by dinitrogenase reductase ADP-ribosyltransferase mark. [4Fe-4S] cluster is bound at residue cysteine 131.

The protein belongs to the NifH/BchL/ChlL family. In terms of assembly, homodimer. [4Fe-4S] cluster serves as cofactor. Post-translationally, the reversible ADP-ribosylation of Arg-97 inactivates the nitrogenase reductase and regulates nitrogenase activity.

The catalysed reaction is N2 + 8 reduced [2Fe-2S]-[ferredoxin] + 16 ATP + 16 H2O = H2 + 8 oxidized [2Fe-2S]-[ferredoxin] + 2 NH4(+) + 16 ADP + 16 phosphate + 6 H(+). In terms of biological role, the key enzymatic reactions in nitrogen fixation are catalyzed by the nitrogenase complex, which has 2 components: the iron protein and the molybdenum-iron protein. This chain is Nitrogenase iron protein, found in Chlorobaculum parvum (strain DSM 263 / NCIMB 8327) (Chlorobium vibrioforme subsp. thiosulfatophilum).